The chain runs to 1651 residues: Roundabout homolog 1 (1651 aa).

Residues 1–25 form the signal peptide; the sequence is MKWKHVPFLVMISLLSLSPNHLFLA. Over 26 to 897 the chain is Extracellular; that stretch reads QLIPDPEDVE…QQISDVVKQP (872 aa). The interval 33–57 is disordered; sequence DVERGNDHGTPIPTSDNDDNSLGYT. A compositionally biased stretch (polar residues) spans 44–56; it reads IPTSDNDDNSLGY. 5 Ig-like C2-type domains span residues 68–164, 170–257, 262–346, 351–446, and 455–541; these read PRIV…ASLE, DDFR…AELT, PSFV…ATLT, PHFV…LEVT, and PVIR…AYIE. An intrachain disulfide couples cysteine 89 to cysteine 147. An N-linked (GlcNAc...) asparagine glycan is attached at asparagine 160. Cystine bridges form between cysteine 191–cysteine 240, cysteine 283–cysteine 330, and cysteine 372–cysteine 428. The N-linked (GlcNAc...) asparagine glycan is linked to asparagine 463. Cysteine 476 and cysteine 525 are joined by a disulfide. Fibronectin type-III domains lie at 563–657, 676–773, and 778–874; these read APSK…TQDV, AVLH…TLEE, and PPQG…LDAH. N-linked (GlcNAc...) asparagine glycans are attached at residues asparagine 790, asparagine 820, and asparagine 827. Residues 898–918 form a helical membrane-spanning segment; the sequence is AFIAGIGAACWIILMVFSIWL. Topologically, residues 919–1651 are cytoplasmic; that stretch reads YRHRKKRNGL…NNEELEETES (733 aa). Phosphoserine is present on serine 940. Threonine 948 is modified (phosphothreonine). Tyrosine 1038 carries the phosphotyrosine; by ABL; in vitro modification. At serine 1055 the chain carries Phosphoserine. A phosphotyrosine; by ABL; in vitro mark is found at tyrosine 1073 and tyrosine 1114. Disordered regions lie at residues 1124–1202, 1224–1337, 1352–1397, and 1420–1651; these read KDYR…SEEY, YLQQ…ADME, EQTP…DGSF, and RRQM…ETES. Residues 1137–1146 are compositionally biased toward polar residues; sequence PYNQSYDQNT. A compositionally biased stretch (low complexity) spans 1147-1163; it reads GGSYNSSDRGSSTSGSQ. Residues 1186-1196 are compositionally biased toward pro residues; the sequence is LPPPPAHPPPH. Phosphothreonine is present on threonine 1240. A compositionally biased stretch (polar residues) spans 1255–1269; that stretch reads YSHQSTATLTPSPQE. Basic and acidic residues predominate over residues 1281–1293; the sequence is ETGHMQHQPDRRR. Over residues 1296 to 1307 the composition is skewed to pro residues; sequence VSPPPPPRPISP. At serine 1297 the chain carries Phosphoserine. The span at 1322-1336 shows a compositional bias: acidic residues; the sequence is MDTDAPEEEEDEADM. Residues 1384–1397 are compositionally biased toward low complexity; sequence SSGRSSVSSSDGSF. The span at 1438–1451 shows a compositional bias: polar residues; the sequence is PRPTSPVSTDSNMS. A compositionally biased stretch (basic residues) spans 1459-1470; that stretch reads RPAKKLKHQPGH. A compositionally biased stretch (pro residues) spans 1480-1490; the sequence is LPPPPVPPPAI. 2 stretches are compositionally biased toward basic and acidic residues: residues 1516-1541 and 1549-1573; these read ARTD…RQVV and DPRE…RDLP. The segment covering 1592-1601 has biased composition (polar residues); sequence FPTSNNPRDP. Positions 1602-1614 are enriched in low complexity; the sequence is SSSSSMSSRGSGS. Over residues 1642–1651 the composition is skewed to acidic residues; that stretch reads NNEELEETES.

This sequence belongs to the immunoglobulin superfamily. ROBO family. Homodimer. Dimerization is mediated by the extracellular domain and is independent of SLIT liganding. Interacts with SLIT1. Interacts with SLIT2. Interacts with FLRT3. Interacts with MYO9B (via Rho-GAP domain). In terms of processing, ubiquitinated. May be deubiquitinated by USP33. Widely expressed, with exception of kidney.

It is found in the cell membrane. Its subcellular location is the cell projection. It localises to the axon. The protein resides in the endoplasmic reticulum-Golgi intermediate compartment membrane. In terms of biological role, receptor for SLIT1 and SLIT2 that mediates cellular responses to molecular guidance cues in cellular migration, including axonal navigation at the ventral midline of the neural tube and projection of axons to different regions during neuronal development. Interaction with the intracellular domain of FLRT3 mediates axon attraction towards cells expressing NTN1. In axon growth cones, the silencing of the attractive effect of NTN1 by SLIT2 may require the formation of a ROBO1-DCC complex. Plays a role in the regulation of cell migration via its interaction with MYO9B; inhibits MYO9B-mediated stimulation of RHOA GTPase activity, and thereby leads to increased levels of active, GTP-bound RHOA. May be required for lung development. This is Roundabout homolog 1 (ROBO1) from Homo sapiens (Human).